Reading from the N-terminus, the 546-residue chain is Probable protein kinase UbiB (546 aa).

One can recognise a Protein kinase domain in the interval 123–501 (DFQEIPLASA…RTNHGQALFL (379 aa)). Residues 129–137 (LASASISQV) and Lys-152 each bind ATP. Asp-287 (proton acceptor) is an active-site residue. The next 2 membrane-spanning stretches (helical) occupy residues 497–517 (QALF…FLYI) and 521–541 (YLKI…TIGW).

This sequence belongs to the ABC1 family. UbiB subfamily.

Its subcellular location is the cell inner membrane. The protein operates within cofactor biosynthesis; ubiquinone biosynthesis [regulation]. Its function is as follows. Is probably a protein kinase regulator of UbiI activity which is involved in aerobic coenzyme Q (ubiquinone) biosynthesis. The chain is Probable protein kinase UbiB from Blochmanniella pennsylvanica (strain BPEN).